Reading from the N-terminus, the 551-residue chain is Interleukin-2 receptor subunit beta (551 aa).

Positions 1–26 are cleaved as a signal peptide; the sequence is MATLALSWCLPLLILLLPLATSSASA. Residues 27-240 are Extracellular-facing; it reads AVNGTSRFTC…TKPAALGKDT (214 aa). N-linked (GlcNAc...) asparagine glycans are attached at residues asparagine 29, asparagine 43, and asparagine 71. An intrachain disulfide couples cysteine 36 to cysteine 46. An intrachain disulfide couples cysteine 74 to cysteine 86. Residues 134 to 234 form the Fibronectin type-III domain; sequence APISLQVVHV…QPLAFRTKPA (101 aa). Asparagine 149 carries N-linked (GlcNAc...) asparagine glycosylation. The WSXWS motif signature appears at 220 to 224; it reads WSPWS. A helical membrane pass occupies residues 241–265; that stretch reads IPWLGHLLVGLSGAFGFIILVYLLI. At 266–551 the chain is on the cytoplasmic side; the sequence is NCRNTGPWLK…LQDQDPTHLV (286 aa). The Box 1 motif motif lies at 278-286; the sequence is LKCHTPDPS. Disordered regions lie at residues 389 to 417, 430 to 484, and 496 to 517; these read EEEP…EDDA, FSPS…DLVD, and AGEQ…ARPP.

The protein belongs to the type I cytokine receptor family. Type 4 subfamily. Non-covalent dimer of an alpha and a beta subunit. IL2R exists in 3 different forms: a high affinity dimer, an intermediate affinity monomer (beta subunit), and a low affinity monomer (alpha subunit). The high and intermediate affinity forms also associate with a gamma subunit. Interacts with SHB upon interleukin stimulation.

It localises to the cell membrane. It is found in the cell surface. Its function is as follows. Receptor for interleukin-2. This beta subunit is involved in receptor mediated endocytosis and transduces the mitogenic signals of IL2. Probably in association with IL15RA, involved in the stimulation of neutrophil phagocytosis by IL15. The sequence is that of Interleukin-2 receptor subunit beta (IL2RB) from Macaca fascicularis (Crab-eating macaque).